The primary structure comprises 688 residues: MATASGASDLSGSGAPPPGVGAQAAAAAEEEEREVVRVRVKKCESFLPPEFRSFAVDPQITSLDVLQHILIRAFDLSGKKNFGISYLGRDRLGQEVYLSLLSDWDLSTAFATASKPYLQLRVDIRPSEDSPLLEDWDIISPKDVIGSDVLLAEKRSSLTTAALPFTQSILTQVGRTLSKVQQVLSWSYGEDVKPFKPPLSDAEFHTYLNHEGQLSRPEELRLRIYHGGVEPSLRKVVWRYLLNVYPDGLTGRERMDYMKRKSREYEQLKSEWAQRANPEDLEFIRSTVLKDVLRTDRAHPYYAGPEDGPHLRALHDLLTTYAVTHPQVSYCQGMSDLASPILAVMDHEGHAFVCFCGIMKRLAANFHPDGRAMATKFAHLKLLLRHADPDFYQYLQEAGADDLFFCYRWLLLELKREFAFDDALRMLEVTWSSLPPDPPEHEVELVGPPSQVADAGFGGHRGWPVRQRHMLRPAGGGGSTFEDAVDHLATASQGPGGGGRLLRQASLDGLQQLRDNMGSRRDPLVQLPHPAALISSKSLSEPLLNSPDPLLSSFSHPDSPSSSSPPSTQEASPTGDMAVGSPLMQEVGSPKDPGKSLPPVPPMGLPPPQEFGRGNPFMLFLCLAILLEHRDHIMRNGLDYNELAMHFDRLVRKHHLGRVLRRARALFADYLQSEVWDSEEGAEATAAS.

The segment at 1-27 (MATASGASDLSGSGAPPPGVGAQAAAA) is disordered. Ser140 is modified (phosphoserine). Thr160 carries the phosphothreonine modification. The Rab-GAP TBC domain maps to 228–434 (GVEPSLRKVV…RMLEVTWSSL (207 aa)). A Phosphoserine modification is found at Ser506. Low complexity predominate over residues 544–567 (LNSPDPLLSSFSHPDSPSSSSPPS). The segment at 544–606 (LNSPDPLLSS…LPPVPPMGLP (63 aa)) is disordered. Over residues 596–606 (SLPPVPPMGLP) the composition is skewed to pro residues.

As to quaternary structure, interacts (via N-terminus) with MAP1LC3B, GABARAP and GABARAPL2.

It is found in the cytoplasm. Its subcellular location is the cytoplasmic vesicle. The protein localises to the autophagosome. Functionally, acts as a GTPase-activating protein specific for RAB33B. Involved in the regulation of autophagosome maturation, the process in which autophagosomes fuse with endosomes and lysosomes. This chain is TBC1 domain family member 25 (TBC1D25), found in Homo sapiens (Human).